Consider the following 155-residue polypeptide: UPF0266 membrane protein lin0773 (155 aa).

The next 3 helical transmembrane spans lie at Ile-8–Ile-28, Arg-46–Phe-66, and Pro-70–Phe-90.

This sequence belongs to the UPF0266 family.

Its subcellular location is the cell membrane. This Listeria innocua serovar 6a (strain ATCC BAA-680 / CLIP 11262) protein is UPF0266 membrane protein lin0773.